We begin with the raw amino-acid sequence, 161 residues long: Regulator of ribonuclease activity A (161 aa).

This sequence belongs to the RraA family. As to quaternary structure, homotrimer. Binds to both RNA-binding sites in the C-terminal region of Rne and to RhlB.

The protein localises to the cytoplasm. Globally modulates RNA abundance by binding to RNase E (Rne) and regulating its endonucleolytic activity. Can modulate Rne action in a substrate-dependent manner by altering the composition of the degradosome. Modulates RNA-binding and helicase activities of the degradosome. This chain is Regulator of ribonuclease activity A, found in Shigella flexneri serotype 5b (strain 8401).